A 284-amino-acid polypeptide reads, in one-letter code: Homeobox protein Hox-D13 (284 aa).

A DNA-binding region (homeobox) is located at residues Gly-217–Val-276.

This sequence belongs to the Abd-B homeobox family.

It is found in the nucleus. Sequence-specific transcription factor that binds gene promoters and activates their transcription. Part of a developmental regulatory system that provides cells with specific positional identities on the anterior-posterior axis. This chain is Homeobox protein Hox-D13 (HOXD13), found in Heterodontus francisci (Horn shark).